The sequence spans 309 residues: Pantothenate kinase (309 aa).

Glycine 92–serine 99 provides a ligand contact to ATP.

Belongs to the prokaryotic pantothenate kinase family.

Its subcellular location is the cytoplasm. The enzyme catalyses (R)-pantothenate + ATP = (R)-4'-phosphopantothenate + ADP + H(+). It functions in the pathway cofactor biosynthesis; coenzyme A biosynthesis; CoA from (R)-pantothenate: step 1/5. This chain is Pantothenate kinase, found in Latilactobacillus sakei subsp. sakei (strain 23K) (Lactobacillus sakei subsp. sakei).